A 477-amino-acid polypeptide reads, in one-letter code: Metallopeptidase AprA (477 aa).

Residues 1–20 (MSKAKDKAIVSAAQASTAYS) form the signal peptide. His-183 serves as a coordination point for Zn(2+). Glu-184 is a catalytic residue. His-187 and His-193 together coordinate Zn(2+). 36 residues coordinate Ca(2+): Arg-264, Gly-266, Thr-268, Asp-296, Gly-298, Gly-299, Asp-301, Thr-338, Glu-340, Gly-345, Gly-347, Asp-349, Asn-354, Ala-356, Asn-358, Gly-362, Gly-363, Ala-364, Gly-365, Asp-367, Gly-371, Ala-372, Gly-373, Gly-374, Asp-376, Gly-380, Gly-381, Ala-382, Gly-383, Asp-385, Asp-394, Asp-401, Asp-411, Asp-453, Ser-455, and Asp-461. Hemolysin-type calcium-binding repeat units lie at residues 343-360 (FGGAGNDLIIGNNAANVI), 361-378 (KGGAGNDLIYGAGGADQL), and 379-391 (WGGAGNDTFVFGA).

This sequence belongs to the peptidase M10B family. Ca(2+) serves as cofactor. The cofactor is Zn(2+).

It localises to the secreted. Is completely inhibited by the metal cation chelators 1,10-phenanthroline and EDTA, but PMSF, pepstatin A and E-64 have no effect on activity. Functionally, peptidase able to cleave azocasein and the milk substrates beta-casein and Na-caseinate. Can withstand UHT processing of milk, and is able to spoil UHT milk over the storage period. This is Metallopeptidase AprA from Pseudomonas marginalis (Pseudomonas panacis).